A 1475-amino-acid polypeptide reads, in one-letter code: Protein STU1 (1475 aa).

2 disordered regions span residues 870 to 913 and 1113 to 1134; these read REST…EPDL and DGES…NRPA. Residues 887–896 are compositionally biased toward basic and acidic residues; that stretch reads DGAHGGDARD.

Belongs to the CLASP family. As to quaternary structure, interacts with microtubules.

It localises to the cytoplasm. The protein localises to the cytoskeleton. Its subcellular location is the nucleus. It is found in the spindle. Functionally, microtubule binding protein that promotes the stabilization of dynamic microtubules. Required for mitotic spindle formation. The polypeptide is Protein STU1 (STU1) (Eremothecium gossypii (strain ATCC 10895 / CBS 109.51 / FGSC 9923 / NRRL Y-1056) (Yeast)).